Here is a 322-residue protein sequence, read N- to C-terminus: Phosphatidylserine decarboxylase proenzyme (322 aa).

Active-site charge relay system; for autoendoproteolytic cleavage activity residues include D90, H147, and S254. The Schiff-base intermediate with substrate; via pyruvic acid; for decarboxylase activity role is filled by S254. A Pyruvic acid (Ser); by autocatalysis modification is found at S254. The segment at 293–322 (PDAEPAPLPAEEIEAEHDASPLVDDKKDQV) is disordered. Residues 308-322 (EHDASPLVDDKKDQV) show a composition bias toward basic and acidic residues.

This sequence belongs to the phosphatidylserine decarboxylase family. PSD-B subfamily. Prokaryotic type I sub-subfamily. In terms of assembly, heterodimer of a large membrane-associated beta subunit and a small pyruvoyl-containing alpha subunit. It depends on pyruvate as a cofactor. Is synthesized initially as an inactive proenzyme. Formation of the active enzyme involves a self-maturation process in which the active site pyruvoyl group is generated from an internal serine residue via an autocatalytic post-translational modification. Two non-identical subunits are generated from the proenzyme in this reaction, and the pyruvate is formed at the N-terminus of the alpha chain, which is derived from the carboxyl end of the proenzyme. The autoendoproteolytic cleavage occurs by a canonical serine protease mechanism, in which the side chain hydroxyl group of the serine supplies its oxygen atom to form the C-terminus of the beta chain, while the remainder of the serine residue undergoes an oxidative deamination to produce ammonia and the pyruvoyl prosthetic group on the alpha chain. During this reaction, the Ser that is part of the protease active site of the proenzyme becomes the pyruvoyl prosthetic group, which constitutes an essential element of the active site of the mature decarboxylase.

It localises to the cell membrane. It carries out the reaction a 1,2-diacyl-sn-glycero-3-phospho-L-serine + H(+) = a 1,2-diacyl-sn-glycero-3-phosphoethanolamine + CO2. The protein operates within phospholipid metabolism; phosphatidylethanolamine biosynthesis; phosphatidylethanolamine from CDP-diacylglycerol: step 2/2. Functionally, catalyzes the formation of phosphatidylethanolamine (PtdEtn) from phosphatidylserine (PtdSer). This is Phosphatidylserine decarboxylase proenzyme from Escherichia coli O9:H4 (strain HS).